The sequence spans 57 residues: UPF0391 membrane protein RPC_2356 (57 aa).

2 consecutive transmembrane segments (helical) span residues 6–26 (WALI…TGIS) and 35–55 (ILFY…LTIF).

It belongs to the UPF0391 family.

The protein resides in the cell membrane. The sequence is that of UPF0391 membrane protein RPC_2356 from Rhodopseudomonas palustris (strain BisB18).